Here is an 88-residue protein sequence, read N- to C-terminus: Small ribosomal subunit protein uS15c (88 aa).

It belongs to the universal ribosomal protein uS15 family. In terms of assembly, part of the 30S ribosomal subunit.

It is found in the plastid. The protein localises to the chloroplast. The polypeptide is Small ribosomal subunit protein uS15c (rps15) (Calycanthus floridus var. glaucus (Eastern sweetshrub)).